Consider the following 662-residue polypeptide: Glycogen debranching enzyme (662 aa).

Asp-338 functions as the Nucleophile in the catalytic mechanism. Catalysis depends on Glu-373, which acts as the Proton donor.

Belongs to the glycosyl hydrolase 13 family.

The enzyme catalyses Hydrolysis of (1-&gt;6)-alpha-D-glucosidic linkages to branches with degrees of polymerization of three or four glucose residues in limit dextrin.. It functions in the pathway glycan degradation; glycogen degradation. In terms of biological role, removes maltotriose and maltotetraose chains that are attached by 1,6-alpha-linkage to the limit dextrin main chain, generating a debranched limit dextrin. The protein is Glycogen debranching enzyme of Yersinia pseudotuberculosis serotype IB (strain PB1/+).